The following is a 197-amino-acid chain: MLTAKFDQLVKQLRILPGVGQKSAQRMALHLLTKKRPQGMALAQALDEAMRDIVECQRCHSFSDEAVCPLCQDPRRDDTLLCVVETAADVMAIEQTAGYRGRYFVLGGHLSPIDGISADDLNIEQLVWRVKQEPVEELILATGTTVEGQTTAHFISEAVSRHVNKVTRLAQGVPMGGELEYLDSMTLGQAMQNRSFL.

The C4-type zinc-finger motif lies at 56–71 (CQRCHSFSDEAVCPLC). One can recognise a Toprim domain in the interval 79–174 (TLLCVVETAA…KVTRLAQGVP (96 aa)).

The protein belongs to the RecR family.

May play a role in DNA repair. It seems to be involved in an RecBC-independent recombinational process of DNA repair. It may act with RecF and RecO. The sequence is that of Recombination protein RecR from Psychrobacter cryohalolentis (strain ATCC BAA-1226 / DSM 17306 / VKM B-2378 / K5).